A 427-amino-acid polypeptide reads, in one-letter code: Tol-Pal system protein TolB (427 aa).

The first 23 residues, 1 to 23, serve as a signal peptide directing secretion; it reads MKLIARLMSMCAVLFFAINSAYA.

It belongs to the TolB family. The Tol-Pal system is composed of five core proteins: the inner membrane proteins TolA, TolQ and TolR, the periplasmic protein TolB and the outer membrane protein Pal. They form a network linking the inner and outer membranes and the peptidoglycan layer.

The protein localises to the periplasm. In terms of biological role, part of the Tol-Pal system, which plays a role in outer membrane invagination during cell division and is important for maintaining outer membrane integrity. The sequence is that of Tol-Pal system protein TolB from Actinobacillus succinogenes (strain ATCC 55618 / DSM 22257 / CCUG 43843 / 130Z).